The primary structure comprises 412 residues: Esterase EstD (412 aa).

An N-terminal signal peptide occupies residues Met-1–Asp-20. Residue Ser-243 is the Nucleophile of the active site. Catalysis depends on charge relay system residues Asp-347 and His-378.

Belongs to the AB hydrolase superfamily. Esterase 10 family. In terms of assembly, exists mainly as a monomer and, to some extent as a dimer.

The enzyme catalyses a carboxylic ester + H2O = an alcohol + a carboxylate + H(+). With respect to regulation, is strongly inhibited by phenylmethylsulfonyl fluoride, a serine protease inhibitor, and by mercury chloride. Diethyl pyrocarbonate, a histidine modifier, also inhibits the reaction, albeit less pronounced than phenylmethylsulfonyl fluoride. EDTA and dithiothreitol have no effect on enzyme activity. Exhibits significant esterase activity with a preference for short acyl chain esters (C4-C8) in vitro. Its physiological function is not known. Displays neither proteolytic activity using casein as substrate, nor peptidase activity when assayed with L-leucine p-nitroanilide and L-proline p-nitroanilide. The polypeptide is Esterase EstD (Thermotoga maritima (strain ATCC 43589 / DSM 3109 / JCM 10099 / NBRC 100826 / MSB8)).